The primary structure comprises 503 residues: Cobyric acid synthase (503 aa).

In terms of domain architecture, GATase cobBQ-type spans 260–453 (KIGVAAIYFP…FHALFDESSV (194 aa)). The active-site Nucleophile is Cys341. The active site involves His445.

This sequence belongs to the CobB/CobQ family. CobQ subfamily.

It functions in the pathway cofactor biosynthesis; adenosylcobalamin biosynthesis. Its function is as follows. Catalyzes amidations at positions B, D, E, and G on adenosylcobyrinic A,C-diamide. NH(2) groups are provided by glutamine, and one molecule of ATP is hydrogenolyzed for each amidation. The protein is Cobyric acid synthase of Pelodictyon phaeoclathratiforme (strain DSM 5477 / BU-1).